The sequence spans 593 residues: NADH-quinone oxidoreductase subunit C/D (593 aa).

The segment at 1 to 184 (MTADTAVSIP…DPFSLTLAKQ (184 aa)) is NADH dehydrogenase I subunit C. The interval 208 to 593 (DYMFLNLGPN…IDFVMADVDR (386 aa)) is NADH dehydrogenase I subunit D.

It in the N-terminal section; belongs to the complex I 30 kDa subunit family. The protein in the C-terminal section; belongs to the complex I 49 kDa subunit family. NDH-1 is composed of 13 different subunits. Subunits NuoB, CD, E, F, and G constitute the peripheral sector of the complex.

The protein localises to the cell inner membrane. The catalysed reaction is a quinone + NADH + 5 H(+)(in) = a quinol + NAD(+) + 4 H(+)(out). Functionally, NDH-1 shuttles electrons from NADH, via FMN and iron-sulfur (Fe-S) centers, to quinones in the respiratory chain. The immediate electron acceptor for the enzyme in this species is believed to be ubiquinone. Couples the redox reaction to proton translocation (for every two electrons transferred, four hydrogen ions are translocated across the cytoplasmic membrane), and thus conserves the redox energy in a proton gradient. This is NADH-quinone oxidoreductase subunit C/D from Ectopseudomonas mendocina (strain ymp) (Pseudomonas mendocina).